A 257-amino-acid chain; its full sequence is 3-deoxy-manno-octulosonate cytidylyltransferase (257 aa).

This sequence belongs to the KdsB family.

The protein localises to the cytoplasm. It catalyses the reaction 3-deoxy-alpha-D-manno-oct-2-ulosonate + CTP = CMP-3-deoxy-beta-D-manno-octulosonate + diphosphate. It participates in nucleotide-sugar biosynthesis; CMP-3-deoxy-D-manno-octulosonate biosynthesis; CMP-3-deoxy-D-manno-octulosonate from 3-deoxy-D-manno-octulosonate and CTP: step 1/1. Its pathway is bacterial outer membrane biogenesis; lipopolysaccharide biosynthesis. Its function is as follows. Activates KDO (a required 8-carbon sugar) for incorporation into bacterial lipopolysaccharide in Gram-negative bacteria. The sequence is that of 3-deoxy-manno-octulosonate cytidylyltransferase from Chromohalobacter salexigens (strain ATCC BAA-138 / DSM 3043 / CIP 106854 / NCIMB 13768 / 1H11).